A 465-amino-acid chain; its full sequence is GTPase Der (465 aa).

EngA-type G domains are found at residues 3 to 166 and 184 to 358; these read FLVA…LNEY and IHFS…ACAN. GTP is bound by residues 9-16, 56-60, 118-121, 190-197, 237-241, and 302-305; these read GRANVGKS, DTGGI, NKVD, GRPNVGKS, DTAGV, and NKWD. The KH-like domain maps to 359-443; the sequence is KKITTADATC…PIVFEFKQSE (85 aa). The interval 446–465 is disordered; that stretch reads FADRKNKRSKDEGSKSKKVK.

The protein belongs to the TRAFAC class TrmE-Era-EngA-EngB-Septin-like GTPase superfamily. EngA (Der) GTPase family. Associates with the 50S ribosomal subunit.

Its function is as follows. GTPase that plays an essential role in the late steps of ribosome biogenesis. The chain is GTPase Der from Francisella tularensis subsp. mediasiatica (strain FSC147).